The following is a 569-amino-acid chain: ATP-dependent RNA helicase dhh1 (569 aa).

The span at 1-16 (MSDQLADQLKATSLSS) shows a compositional bias: polar residues. The segment at 1 to 39 (MSDQLADQLKATSLSSGPEDWKKGLNLPARDTRQQTEDV) is disordered. The short motif at 45-73 (LDWEDFIHDRDLLMGIFEAGFEKPSPIQE) is the Q motif element. One can recognise a Helicase ATP-binding domain in the interval 76 to 246 (IPVALTGRDI…DKNMTSPYEI (171 aa)). ATP is bound at residue 89 to 96 (AKNGTGKT). Positions 194 to 197 (DEAD) match the DEAD box motif. The 161-residue stretch at 256–416 (GITQYYAFVE…PIPQTIDKSL (161 aa)) folds into the Helicase C-terminal domain. The segment at 436–569 (AQQPQQQLQQ…GQPQGPLSAQ (134 aa)) is disordered. The segment covering 437–482 (QQPQQQLQQSQRPQQSQQQQHFSTQTQPSNQLPPQQGNQQLGFNPQ) has biased composition (low complexity). A compositionally biased stretch (polar residues) spans 495-520 (GDWQGQNGRQNGTGASNNQPRPTNYQ). Gly residues predominate over residues 529–542 (SRGGRGRGFQGQGG). Residues 543-569 (RQNQNYGGQRGPRTQGQGQPQGPLSAQ) show a composition bias toward low complexity.

This sequence belongs to the DEAD box helicase family. DDX6/DHH1 subfamily.

It is found in the cytoplasm. Its subcellular location is the P-body. It carries out the reaction ATP + H2O = ADP + phosphate + H(+). Functionally, ATP-dependent RNA helicase involved in mRNA turnover, and more specifically in mRNA decapping. Is involved in G1/S DNA-damage checkpoint recovery, probably through the regulation of the translational status of a subset of mRNAs. May also have a role in translation and mRNA nuclear export. This is ATP-dependent RNA helicase dhh1 (drh-10) from Neurospora crassa (strain ATCC 24698 / 74-OR23-1A / CBS 708.71 / DSM 1257 / FGSC 987).